The primary structure comprises 423 residues: Serine--tRNA ligase (423 aa).

An L-serine-binding site is contributed by 229–231 (TAE). An ATP-binding site is contributed by 260 to 262 (RKE). Glu283 lines the L-serine pocket. 347–350 (EISS) contributes to the ATP binding site. Residue Ser383 coordinates L-serine.

Belongs to the class-II aminoacyl-tRNA synthetase family. Type-1 seryl-tRNA synthetase subfamily. In terms of assembly, homodimer. The tRNA molecule binds across the dimer.

It is found in the cytoplasm. It carries out the reaction tRNA(Ser) + L-serine + ATP = L-seryl-tRNA(Ser) + AMP + diphosphate + H(+). It catalyses the reaction tRNA(Sec) + L-serine + ATP = L-seryl-tRNA(Sec) + AMP + diphosphate + H(+). Its pathway is aminoacyl-tRNA biosynthesis; selenocysteinyl-tRNA(Sec) biosynthesis; L-seryl-tRNA(Sec) from L-serine and tRNA(Sec): step 1/1. In terms of biological role, catalyzes the attachment of serine to tRNA(Ser). Is also able to aminoacylate tRNA(Sec) with serine, to form the misacylated tRNA L-seryl-tRNA(Sec), which will be further converted into selenocysteinyl-tRNA(Sec). The sequence is that of Serine--tRNA ligase from Syntrophotalea carbinolica (strain DSM 2380 / NBRC 103641 / GraBd1) (Pelobacter carbinolicus).